Consider the following 152-residue polypeptide: Transcriptional regulator MraZ (152 aa).

2 SpoVT-AbrB domains span residues 5–52 and 81–124; these read ATMV…PLPE and ASEC…DEQT.

It belongs to the MraZ family. Forms oligomers.

The protein localises to the cytoplasm. The protein resides in the nucleoid. Functionally, negatively regulates its own expression and that of the subsequent genes in the proximal part of the division and cell wall (dcw) gene cluster. Acts by binding directly to DNA. May also regulate the expression of genes outside the dcw cluster. The protein is Transcriptional regulator MraZ of Yersinia pestis bv. Antiqua (strain Antiqua).